The primary structure comprises 488 residues: 3-octaprenyl-4-hydroxybenzoate carboxy-lyase (488 aa).

Residue N172 participates in Mn(2+) binding. Prenylated FMN contacts are provided by residues 175-177 (IYR), 189-191 (RWL), and 194-195 (RG). E238 contributes to the Mn(2+) binding site. D287 serves as the catalytic Proton donor.

This sequence belongs to the UbiD family. Homohexamer. The cofactor is prenylated FMN. Mn(2+) serves as cofactor.

The protein localises to the cell membrane. It catalyses the reaction a 4-hydroxy-3-(all-trans-polyprenyl)benzoate + H(+) = a 2-(all-trans-polyprenyl)phenol + CO2. Its pathway is cofactor biosynthesis; ubiquinone biosynthesis. Catalyzes the decarboxylation of 3-octaprenyl-4-hydroxy benzoate to 2-octaprenylphenol, an intermediate step in ubiquinone biosynthesis. This is 3-octaprenyl-4-hydroxybenzoate carboxy-lyase from Pseudomonas putida (strain W619).